A 240-amino-acid polypeptide reads, in one-letter code: Probable peptide export permease protein YydJ (240 aa).

Helical transmembrane passes span 13–33, 50–70, 97–117, 126–146, 153–173, and 210–230; these read VIII…FLLV, SYTV…AFFI, IAVL…IISL, ALLL…IGTI, ILIS…LVAI, and VLFI…VLRF.

In terms of assembly, the complex is composed of 2 ATP-binding proteins (YydI), two transmembrane proteins (YydJ).

It is found in the cell membrane. In terms of biological role, suggested to be part of an ABC transporter complex YydIJ involved in export of the modified peptide YydF. The chain is Probable peptide export permease protein YydJ (yydJ) from Bacillus subtilis (strain 168).